A 155-amino-acid chain; its full sequence is SsrA-binding protein (155 aa).

It belongs to the SmpB family.

The protein resides in the cytoplasm. Functionally, required for rescue of stalled ribosomes mediated by trans-translation. Binds to transfer-messenger RNA (tmRNA), required for stable association of tmRNA with ribosomes. tmRNA and SmpB together mimic tRNA shape, replacing the anticodon stem-loop with SmpB. tmRNA is encoded by the ssrA gene; the 2 termini fold to resemble tRNA(Ala) and it encodes a 'tag peptide', a short internal open reading frame. During trans-translation Ala-aminoacylated tmRNA acts like a tRNA, entering the A-site of stalled ribosomes, displacing the stalled mRNA. The ribosome then switches to translate the ORF on the tmRNA; the nascent peptide is terminated with the 'tag peptide' encoded by the tmRNA and targeted for degradation. The ribosome is freed to recommence translation, which seems to be the essential function of trans-translation. The chain is SsrA-binding protein from Streptococcus equi subsp. zooepidemicus (strain H70).